Reading from the N-terminus, the 192-residue chain is NOP protein chaperone 1 (192 aa).

Low complexity predominate over residues 1–26; sequence MEVSGESHSGPSCSSSSRDGSGVSVS. The disordered stretch occupies residues 1–39; sequence MEVSGESHSGPSCSSSSRDGSGVSVSKELLMAGSGGRGG. A phosphoserine mark is found at Ser34 and Ser66. Residues 118–192 are disordered; the sequence is FEMNQSHSKE…SENKEKQENK (75 aa). A compositionally biased stretch (acidic residues) spans 129–152; sequence DSSEENSQDSSEESSESEDEDDST. Residues 164–177 show a composition bias toward basic and acidic residues; that stretch reads KLPHSEDGKGKIEV. At Ser180 the chain carries Phosphoserine.

As to quaternary structure, interacts with NOP58, RUVBL1 and RUVBL2; the interactions are direct and NOPCHAP1 bridges the association of NOP58 with RUVBL1:RUVBL2 even in absence of snoRNAs. The interactions with RUVBL1 and RUVBL2 are disrupted upon ATP binding.

Its subcellular location is the nucleus. Client-loading PAQosome/R2TP complex cofactor that selects NOP58 to promote box C/D small nucleolar ribonucleoprotein (snoRNP) assembly. Acts as a bridge between NOP58 and the R2TP complex via RUVBL1:RUVBL2. This is NOP protein chaperone 1 (NOPCHAP1) from Bos taurus (Bovine).